The primary structure comprises 763 residues: F-box protein SKP2 (763 aa).

An F-box domain is found at 54-100 (KSSLMCLPTKVLLLILRTLDFNTLVTLCQVNSRFYNLITNEFLFQNV). Thr-594 carries the post-translational modification Phosphothreonine.

In terms of assembly, interacts with SKP1. Component of the probable SCF(SKP2) complex containing CDC53, SKP1, RBX1 and SKP2. May interact with ribosomes.

It is found in the cytoplasm. The protein operates within protein modification; protein ubiquitination. Functionally, substrate recognition component of a SCF (SKP1-CUL1-F-box protein) E3 ubiquitin-protein ligase complex which mediates the ubiquitination and subsequent proteasomal degradation of target proteins. Probably recognizes and binds to phosphorylated target proteins. Regulates protein levels of sulfur metabolism enzymes. The SCF(SKP2) complex may regulate some transcription factors or regulators of cysteine and methionine biosynthesis. The protein is F-box protein SKP2 (SKP2) of Saccharomyces cerevisiae (strain ATCC 204508 / S288c) (Baker's yeast).